The primary structure comprises 375 residues: PqqA peptide cyclase (375 aa).

In terms of domain architecture, Radical SAM core spans Ile-18 to Leu-235. 3 residues coordinate [4Fe-4S] cluster: Cys-32, Cys-36, and Cys-39.

Belongs to the radical SAM superfamily. PqqE family. In terms of assembly, interacts with PqqD. The interaction is necessary for activity of PqqE. Requires [4Fe-4S] cluster as cofactor.

It catalyses the reaction [PQQ precursor protein] + S-adenosyl-L-methionine = E-Y cross-linked-[PQQ precursor protein] + 5'-deoxyadenosine + L-methionine + H(+). The protein operates within cofactor biosynthesis; pyrroloquinoline quinone biosynthesis. Catalyzes the cross-linking of a glutamate residue and a tyrosine residue in the PqqA protein as part of the biosynthesis of pyrroloquinoline quinone (PQQ). The chain is PqqA peptide cyclase from Rhizobium meliloti (strain 1021) (Ensifer meliloti).